The following is a 196-amino-acid chain: Molybdenum cofactor guanylyltransferase (196 aa).

GTP contacts are provided by residues 10–12, lysine 23, asparagine 51, aspartate 69, and aspartate 99; that span reads LAG. A Mg(2+)-binding site is contributed by aspartate 99.

The protein belongs to the MobA family. Monomer. Mg(2+) serves as cofactor.

The protein localises to the cytoplasm. It carries out the reaction Mo-molybdopterin + GTP + H(+) = Mo-molybdopterin guanine dinucleotide + diphosphate. Functionally, transfers a GMP moiety from GTP to Mo-molybdopterin (Mo-MPT) cofactor (Moco or molybdenum cofactor) to form Mo-molybdopterin guanine dinucleotide (Mo-MGD) cofactor. The polypeptide is Molybdenum cofactor guanylyltransferase (Shewanella woodyi (strain ATCC 51908 / MS32)).